The chain runs to 440 residues: 3-phosphoshikimate 1-carboxyvinyltransferase (440 aa).

3-phosphoshikimate-binding residues include K25, S26, and R30. Position 25 (K25) interacts with phosphoenolpyruvate. Positions 96 and 124 each coordinate phosphoenolpyruvate. Residues S168, Q169, D310, and K337 each contribute to the 3-phosphoshikimate site. Position 169 (Q169) interacts with phosphoenolpyruvate. The Proton acceptor role is filled by D310. Residues R341, R382, and K409 each contribute to the phosphoenolpyruvate site.

It belongs to the EPSP synthase family. As to quaternary structure, monomer.

The protein localises to the cytoplasm. The catalysed reaction is 3-phosphoshikimate + phosphoenolpyruvate = 5-O-(1-carboxyvinyl)-3-phosphoshikimate + phosphate. The protein operates within metabolic intermediate biosynthesis; chorismate biosynthesis; chorismate from D-erythrose 4-phosphate and phosphoenolpyruvate: step 6/7. Catalyzes the transfer of the enolpyruvyl moiety of phosphoenolpyruvate (PEP) to the 5-hydroxyl of shikimate-3-phosphate (S3P) to produce enolpyruvyl shikimate-3-phosphate and inorganic phosphate. The chain is 3-phosphoshikimate 1-carboxyvinyltransferase from Chlamydia trachomatis serovar L2 (strain ATCC VR-902B / DSM 19102 / 434/Bu).